We begin with the raw amino-acid sequence, 436 residues long: Putative UDP-arabinose 4-epimerase 4 (436 aa).

Residues 1–20 (MLNSSGVRTQRRSPRPLSLG) are disordered. Residues 1–60 (MLNSSGVRTQRRSPRPLSLGGRKIITPTKFAYDHHNPDKVLDFVEMDCLEPKTKNNLTGK) are Cytoplasmic-facing. Residues 61–81 (LLLVASLLILAIIVISQSSSF) form a helical; Signal-anchor for type II membrane protein membrane-spanning segment. Topologically, residues 82–436 (TSPSAFSQRE…KIHPHGYNSY (355 aa)) are lumenal. NAD(+) is bound at residue 96-127 (HVLVTGGAGYIGSHAALRLLRDSYRVTIVDNL). The active-site Proton acceptor is the Tyr-244.

It belongs to the NAD(P)-dependent epimerase/dehydratase family. NAD(+) serves as cofactor.

Its subcellular location is the golgi apparatus. The protein resides in the golgi stack membrane. It catalyses the reaction UDP-beta-L-arabinopyranose = UDP-alpha-D-xylose. Its pathway is nucleotide-sugar biosynthesis; UDP-L-arabinose biosynthesis; UDP-L-arabinose from UDP-alpha-D-xylose: step 1/1. It participates in cell wall biogenesis; cell wall polysaccharide biosynthesis. This Arabidopsis thaliana (Mouse-ear cress) protein is Putative UDP-arabinose 4-epimerase 4.